Consider the following 83-residue polypeptide: Weak toxin DE-1 homolog 1 (83 aa).

The signal sequence occupies residues 1 to 21 (MKPVLLTLVVVTIVCLDLGYT). Cystine bridges form between cysteine 24/cysteine 45, cysteine 38/cysteine 62, cysteine 64/cysteine 75, and cysteine 76/cysteine 81.

This sequence belongs to the three-finger toxin family. Short-chain subfamily. Type I alpha-neurotoxin sub-subfamily. As to expression, expressed by the venom gland.

It is found in the secreted. Its function is as follows. Binds to muscle nicotinic acetylcholine receptor (nAChR) and inhibit acetylcholine from binding to the receptor, thereby impairing neuromuscular transmission. This is Weak toxin DE-1 homolog 1 from Ophiophagus hannah (King cobra).